A 302-amino-acid chain; its full sequence is 4-hydroxy-tetrahydrodipicolinate synthase (302 aa).

Pyruvate is bound at residue Thr-57. Tyr-145 (proton donor/acceptor) is an active-site residue. Lys-173 functions as the Schiff-base intermediate with substrate in the catalytic mechanism. Ile-213 is a pyruvate binding site.

Belongs to the DapA family. As to quaternary structure, homotetramer; dimer of dimers.

The protein resides in the cytoplasm. The enzyme catalyses L-aspartate 4-semialdehyde + pyruvate = (2S,4S)-4-hydroxy-2,3,4,5-tetrahydrodipicolinate + H2O + H(+). It functions in the pathway amino-acid biosynthesis; L-lysine biosynthesis via DAP pathway; (S)-tetrahydrodipicolinate from L-aspartate: step 3/4. Functionally, catalyzes the condensation of (S)-aspartate-beta-semialdehyde [(S)-ASA] and pyruvate to 4-hydroxy-tetrahydrodipicolinate (HTPA). This is 4-hydroxy-tetrahydrodipicolinate synthase from Corynebacterium aurimucosum (strain ATCC 700975 / DSM 44827 / CIP 107346 / CN-1) (Corynebacterium nigricans).